Here is a 214-residue protein sequence, read N- to C-terminus: uncharacterized protein (214 aa).

The first 24 residues, 1–24, serve as a signal peptide directing secretion; sequence MKIWIKAICITSFVIQMSACSSSA. The 134-residue stretch at 64–197 folds into the TNase-like domain; sequence ETVKGKVLHI…KEAKAGVWSI (134 aa). Catalysis depends on residues R91, E99, and R142.

This is an uncharacterized protein from Bacillus anthracis.